Here is a 270-residue protein sequence, read N- to C-terminus: Phosphatidylglycerol--prolipoprotein diacylglyceryl transferase (270 aa).

7 helical membrane passes run 17–37 (LAIRWYGLMYLAGFIMFLWFG), 59–79 (MLFYGVLGVILGGRLGYVLFY), 95–115 (WEGGMAFHGGFLGVLIAMWVF), 129–149 (FIAPMIPCGLAAGRIGNFING), 175–195 (PSQLYQFAGEGVALFIILWLF), 202–222 (MGAVSGVFLIGYGAFRFLAEF), and 237–257 (LSMGQWLSLPMIVIGAVMVVW). Arginine 142 lines the a 1,2-diacyl-sn-glycero-3-phospho-(1'-sn-glycerol) pocket.

The protein belongs to the Lgt family.

The protein resides in the cell inner membrane. The enzyme catalyses L-cysteinyl-[prolipoprotein] + a 1,2-diacyl-sn-glycero-3-phospho-(1'-sn-glycerol) = an S-1,2-diacyl-sn-glyceryl-L-cysteinyl-[prolipoprotein] + sn-glycerol 1-phosphate + H(+). It participates in protein modification; lipoprotein biosynthesis (diacylglyceryl transfer). Its function is as follows. Catalyzes the transfer of the diacylglyceryl group from phosphatidylglycerol to the sulfhydryl group of the N-terminal cysteine of a prolipoprotein, the first step in the formation of mature lipoproteins. In Cupriavidus metallidurans (strain ATCC 43123 / DSM 2839 / NBRC 102507 / CH34) (Ralstonia metallidurans), this protein is Phosphatidylglycerol--prolipoprotein diacylglyceryl transferase.